Here is a 919-residue protein sequence, read N- to C-terminus: MTGYTMLRNGGAGNGGQTCMLRWSNRIRLTWLSFTLFVILVFFPLIAHYYLTTLDEADEAGKRIFGPRVGNELCEVKHVLDLCRIRESVSEELLQLEAKRQELNSEIAKLNLKIEACKKSIENAKQDLLQLKNVISQTEHSYKELMAQNQPKLSLPIRLLPEKDDAGLPPPKATRGCRLHNCFDYSRCPLTSGFPVYVYDSDQFVFGSYLDPLVKQAFQATARANVYVTENADIACLYVILVGEMQEPVVLRPAELEKQLYSLPHWRTDGHNHVIINLSRKSDTQNLLYNVSTGRAMVAQSTFYTVQYRPGFDLVVSPLVHAMSEPNFMEIPPQVPVKRKYLFTFQGEKIESLRSSLQEARSFEEEMEGDPPADYDDRIIATLKAVQDSKLDQVLVEFTCKNQPKPSLPTEWALCGEREDRLELLKLSTFALIITPGDPRLVISSGCATRLFEALEVGAVPVVLGEQVQLPYQDMLQWNEAALVVPKPRVTEVHFLLRSLSDSDLLAMRRQGRFLWETYFSTADSIFNTVLAMIRTRIQIPAAPIREEAAAEIPHRSGKAAGTDPNMADNGDLDLGPVETEPPYASPRYLRNFTLTVTDFYRSWNCAPGPFHLFPHTPFDPVLPSEAKFLGSGTGFRPIGGGAGGSGKEFQAALGGNVPREQFTVVMLTYEREEVLMNSLERLNGLPYLNKVVVVWNSPKLPSEDLLWPDIGVPIMVVRTEKNSLNNRFLPWNEIETEAILSIDDDAHLRHDEIMFGFRVWREARDRIVGFPGRYHAWDIPHQSWLYNSNYSCELSMVLTGAAFFHKYYAYLYSYVMPQAIRDMVDEYINCEDIAMNFLVSHITRKPPIKVTSRWTFRCPGCPQALSHDDSHFHERHKCINFFVKVYGYMPLLYTQFRVDSVLFKTRLPHDKTKCFKFI.

Residues 1–30 are Cytoplasmic-facing; the sequence is MTGYTMLRNGGAGNGGQTCMLRWSNRIRLT. A required for interaction with REG3A region spans residues 1 to 140; the sequence is MTGYTMLRNG…LKNVISQTEH (140 aa). A helical; Signal-anchor for type II membrane protein transmembrane segment spans residues 31–51; it reads WLSFTLFVILVFFPLIAHYYL. Residues 52–919 lie on the Lumenal side of the membrane; that stretch reads TTLDEADEAG…HDKTKCFKFI (868 aa). 2 disulfide bridges follow: Cys177–Cys182 and Cys188–Cys236. A glycan (N-linked (GlcNAc...) asparagine) is linked at Asn290. Residue Ser362 is modified to Phosphoserine. Cys400 and Cys415 are disulfide-bonded. Asn592 carries an N-linked (GlcNAc...) asparagine glycan. Residues Leu668, Arg672, Asn697, Asn723, Arg728, Asp744, Asp745, and Asp746 each coordinate UDP-N-acetyl-alpha-D-glucosamine. Residue Asp746 participates in Mn(2+) binding. Asn790 carries an N-linked (GlcNAc...) asparagine glycan. Cys831 and Cys879 form a disulfide bridge. UDP-N-acetyl-alpha-D-glucosamine is bound by residues Glu832, Asp833, and Arg876. Asp833 is a catalytic residue.

This sequence belongs to the glycosyltransferase 47 family. Homodimer; disulfide-linked. Interacts with REG3A. Requires Mn(2+) as cofactor. In terms of tissue distribution, ubiquitous. Expressed in keratinocytes. Expressed in pancreas.

It localises to the endoplasmic reticulum membrane. It is found in the golgi apparatus. The protein localises to the cell membrane. Its subcellular location is the nucleus. It catalyses the reaction 3-O-(beta-D-GlcA-(1-&gt;3)-beta-D-Gal-(1-&gt;3)-beta-D-Gal-(1-&gt;4)-beta-D-Xyl)-L-seryl-[protein] + UDP-N-acetyl-alpha-D-glucosamine = 3-O-(alpha-D-GlcNAc-(1-&gt;4)-beta-D-GlcA-(1-&gt;3)-beta-D-Gal-(1-&gt;3)-beta-D-Gal-(1-&gt;4)-beta-D-Xyl)-L-seryl-[protein] + UDP + H(+). It participates in glycan metabolism; heparan sulfate biosynthesis. Its function is as follows. Glycosyltransferase which regulates the biosynthesis of heparan sulfate (HS). Initiates HS synthesis by transferring the first N-acetyl-alpha-D-glucosamine (alpha-GlcNAc) residue (GlcNAcT-I activity) to the tetrasaccharide linker (GlcA-Gal-Gal-Xyl-)Ser core linker. May also transfer alpha-GlcNAc residues during HS elongation (GlcNAcT-II activity). Lacks glucuronyl transferase II (GlcAT-II) activity. Important for both skeletal development and hematopoiesis, through the formation of HS proteoglycans (HSPGs). Through the synthesis of HS, regulates postnatal pancreatic islet maturation and insulin secretion. In terms of biological role, receptor for REG3A, REG3B and REG3G, induces the activation of downstream signaling pathways such as PI3K-AKT or RAS-RAF-MEK-ERK signaling pathway. Required for the function of REG3A in regulating keratinocyte proliferation and differentiation. Required for the inhibition of skin inflammation mediated by REG3A through the activation of PI3K-AKT-STAT3 pathway. Required for the function of REG3A and REG3G in glucose tolerance in pancreas. Expressed in microglia, is activated by nociceptor-derived REG3G in response to endotoxins, leading to the inhibition of kynurenine pathway to prevent endotoxic death. The protein is Exostosin-like 3 of Homo sapiens (Human).